The chain runs to 734 residues: Photosystem I P700 chlorophyll a apoprotein A2 (734 aa).

The next 8 helical transmembrane spans lie at 46–69, 135–158, 175–199, 273–291, 330–353, 369–395, 417–439, and 517–535; these read IFAS…FHVA, LYTG…FHLQ, LNHH…HVAI, IAHH…GHMY, LHFQ…QHMY, AALY…IFFI, AIIS…LYVH, and FLVH…LILV. Positions 559 and 568 each coordinate [4Fe-4S] cluster. 2 helical membrane-spanning segments follow: residues 575–596 and 643–665; these read AFYL…YWHW and LSVW…MFLI. Chlorophyll a contacts are provided by H654, M662, and Y670. W671 provides a ligand contact to phylloquinone. Residues 707 to 727 form a helical membrane-spanning segment; that stretch reads LVGLAHFSVGYIFTYAAFLIA.

Belongs to the PsaA/PsaB family. As to quaternary structure, the PsaA/B heterodimer binds the P700 chlorophyll special pair and subsequent electron acceptors. PSI consists of a core antenna complex that captures photons, and an electron transfer chain that converts photonic excitation into a charge separation. The eukaryotic PSI reaction center is composed of at least 11 subunits. It depends on P700 is a chlorophyll a/chlorophyll a' dimer, A0 is one or more chlorophyll a, A1 is one or both phylloquinones and FX is a shared 4Fe-4S iron-sulfur center. as a cofactor.

Its subcellular location is the plastid. It is found in the chloroplast thylakoid membrane. It catalyses the reaction reduced [plastocyanin] + hnu + oxidized [2Fe-2S]-[ferredoxin] = oxidized [plastocyanin] + reduced [2Fe-2S]-[ferredoxin]. In terms of biological role, psaA and PsaB bind P700, the primary electron donor of photosystem I (PSI), as well as the electron acceptors A0, A1 and FX. PSI is a plastocyanin-ferredoxin oxidoreductase, converting photonic excitation into a charge separation, which transfers an electron from the donor P700 chlorophyll pair to the spectroscopically characterized acceptors A0, A1, FX, FA and FB in turn. Oxidized P700 is reduced on the lumenal side of the thylakoid membrane by plastocyanin. In Jasminum nudiflorum (Winter jasmine), this protein is Photosystem I P700 chlorophyll a apoprotein A2.